Consider the following 523-residue polypeptide: Beta-glucosidase 31 (523 aa).

An N-terminal signal peptide occupies residues 1 to 22 (MTPARVVFICCVVLLAAAAAAA). A beta-D-glucoside-binding positions include glutamine 49, histidine 149, and 194-195 (NE). Glutamate 195 serves as the catalytic Proton donor. Cysteine 214 and cysteine 223 form a disulfide bridge. N-linked (GlcNAc...) asparagine glycosylation occurs at asparagine 227. The a beta-D-glucoside site is built by tyrosine 339 and glutamate 413. Glutamate 413 acts as the Nucleophile in catalysis. Asparagine 450 carries an N-linked (GlcNAc...) asparagine glycan. A beta-D-glucoside contacts are provided by residues tryptophan 460, 467 to 468 (EY), and phenylalanine 476.

Belongs to the glycosyl hydrolase 1 family.

The enzyme catalyses Hydrolysis of terminal, non-reducing beta-D-glucosyl residues with release of beta-D-glucose.. The protein is Beta-glucosidase 31 (BGLU31) of Oryza sativa subsp. japonica (Rice).